Here is an 879-residue protein sequence, read N- to C-terminus: Putative ankyrin repeat protein L88 (879 aa).

ANK repeat units lie at residues 22 to 62 (KGFT…QKNK), 63 to 96 (KGYTALSIAVRNCGNWCSYKTVRILLEKGAKTNI), 100 to 133 (EGITPLIFASFNSRFCEGFNVINLLLKYGADINA), 137 to 170 (NGYTALMNASSNSNSSSTYTTVKLLLDNDANIDD), 174 to 207 (NGLTCLMHACNNVTLKSSIGTIELLLYYGADINA), 211 to 241 (NGRTALMHACDNSNNIELIELLLNRGADIEA), 245 to 278 (KGLTCLMIASKYAGSINSVEVVEILINRGANIEA), 282 to 313 (KLRTPLMYACKYSHNNTSVIKLLLDKGANIET), 317 to 347 (RNNTALILASTYSSSVEPIKLLLDKGANINH), 351 to 384 (EGCNALNLACINSSYNNNSEIVKLLIDRGSNINN), 387 to 420 (SERTILTSTCEFIGKGSNIDTVKILLDNNADPNI), 424 to 463 (NGNTTLLYMCKKYIKDGPKKRDLNFNVIKLLLDYKANPNF), 470 to 499 (NSLTRLSKYSDKVDIEIIKLLLDYGVDINS), 506 to 542 (SALLLFCMDLQNSCTKISYNCKNIVKLLLEKGADVNI), 546 to 578 (NGNTALSIICESDDNNLSDIIELLLAHNANPNT), 674 to 704 (SGITALLHECQVSDNIEPIKLLLDNGADPNI), and 708 to 738 (KGETALHKAVRHTNKIDVIKLLMDYHANPYI).

This Acanthamoeba polyphaga mimivirus (APMV) protein is Putative ankyrin repeat protein L88.